The following is a 224-amino-acid chain: Redox-sensing transcriptional repressor Rex (224 aa).

Residues Arg-17–Phe-56 constitute a DNA-binding region (H-T-H motif). Residue Gly-91 to Gly-96 coordinates NAD(+).

Belongs to the transcriptional regulatory Rex family. As to quaternary structure, homodimer.

Its subcellular location is the cytoplasm. Its function is as follows. Modulates transcription in response to changes in cellular NADH/NAD(+) redox state. The polypeptide is Redox-sensing transcriptional repressor Rex (Caldanaerobacter subterraneus subsp. tengcongensis (strain DSM 15242 / JCM 11007 / NBRC 100824 / MB4) (Thermoanaerobacter tengcongensis)).